An 89-amino-acid polypeptide reads, in one-letter code: Small ribosomal subunit protein uS19 (89 aa).

The protein belongs to the universal ribosomal protein uS19 family.

In terms of biological role, protein S19 forms a complex with S13 that binds strongly to the 16S ribosomal RNA. This Azobacteroides pseudotrichonymphae genomovar. CFP2 protein is Small ribosomal subunit protein uS19.